The primary structure comprises 467 residues: Ribosomal protein uS12 methylthiotransferase RimO (467 aa).

Residues 1–27 form a disordered region; it reads MTSNPPDLRPDLAPKPTFGTAPRPDQP. Residues 27–137 enclose the MTTase N-terminal domain; the sequence is PTLGMVSLGC…VLDAVHAAVP (111 aa). 6 residues coordinate [4Fe-4S] cluster: cysteine 36, cysteine 72, cysteine 101, cysteine 168, cysteine 172, and cysteine 175. The region spanning 154 to 397 is the Radical SAM core domain; sequence LTPRHFSYLK…MEKAQAISEA (244 aa). The TRAM domain maps to 400 to 467; it reads ASKVGQTLQV…GEYDLWGALR (68 aa).

This sequence belongs to the methylthiotransferase family. RimO subfamily. [4Fe-4S] cluster is required as a cofactor.

It localises to the cytoplasm. It carries out the reaction L-aspartate(89)-[ribosomal protein uS12]-hydrogen + (sulfur carrier)-SH + AH2 + 2 S-adenosyl-L-methionine = 3-methylsulfanyl-L-aspartate(89)-[ribosomal protein uS12]-hydrogen + (sulfur carrier)-H + 5'-deoxyadenosine + L-methionine + A + S-adenosyl-L-homocysteine + 2 H(+). Catalyzes the methylthiolation of an aspartic acid residue of ribosomal protein uS12. The chain is Ribosomal protein uS12 methylthiotransferase RimO from Ruegeria sp. (strain TM1040) (Silicibacter sp.).